A 290-amino-acid polypeptide reads, in one-letter code: Energy-coupling factor transporter ATP-binding protein EcfA2 (290 aa).

One can recognise an ABC transporter domain in the interval 6–246 (EKVEHVYNAR…ADKLAAIGLS (241 aa)). 40–47 (GHTGSGKS) is a binding site for ATP.

It belongs to the ABC transporter superfamily. Energy-coupling factor EcfA family. Forms a stable energy-coupling factor (ECF) transporter complex composed of 2 membrane-embedded substrate-binding proteins (S component), 2 ATP-binding proteins (A component) and 2 transmembrane proteins (T component).

The protein resides in the cell membrane. ATP-binding (A) component of a common energy-coupling factor (ECF) ABC-transporter complex. Unlike classic ABC transporters this ECF transporter provides the energy necessary to transport a number of different substrates. The chain is Energy-coupling factor transporter ATP-binding protein EcfA2 from Geobacillus kaustophilus (strain HTA426).